We begin with the raw amino-acid sequence, 298 residues long: Lipoyl synthase (298 aa).

The [4Fe-4S] cluster site is built by Cys-40, Cys-45, Cys-51, Cys-67, Cys-71, Cys-74, and Ser-280. One can recognise a Radical SAM core domain in the interval 53 to 269 (AVRRTATFMI…KEIALSKGFS (217 aa)).

Belongs to the radical SAM superfamily. Lipoyl synthase family. Requires [4Fe-4S] cluster as cofactor.

Its subcellular location is the cytoplasm. It carries out the reaction [[Fe-S] cluster scaffold protein carrying a second [4Fe-4S](2+) cluster] + N(6)-octanoyl-L-lysyl-[protein] + 2 oxidized [2Fe-2S]-[ferredoxin] + 2 S-adenosyl-L-methionine + 4 H(+) = [[Fe-S] cluster scaffold protein] + N(6)-[(R)-dihydrolipoyl]-L-lysyl-[protein] + 4 Fe(3+) + 2 hydrogen sulfide + 2 5'-deoxyadenosine + 2 L-methionine + 2 reduced [2Fe-2S]-[ferredoxin]. Its pathway is protein modification; protein lipoylation via endogenous pathway; protein N(6)-(lipoyl)lysine from octanoyl-[acyl-carrier-protein]. In terms of biological role, catalyzes the radical-mediated insertion of two sulfur atoms into the C-6 and C-8 positions of the octanoyl moiety bound to the lipoyl domains of lipoate-dependent enzymes, thereby converting the octanoylated domains into lipoylated derivatives. In Geobacillus kaustophilus (strain HTA426), this protein is Lipoyl synthase.